The chain runs to 373 residues: SH3 domain-binding protein 5-like (373 aa).

The interval 1–36 (MEGKEGPPCEVRLPTPGAEREGPVHPELGAFGESAS) is disordered. Coiled-coil stretches lie at residues 35–98 (ASDA…ESAR) and 170–258 (WQEM…KLRY). Disordered regions lie at residues 274–308 (ARRTQSSVLSQRAPPLGAEAPPSVKDGETGPPADT) and 332–373 (DLTD…SVSL). Basic and acidic residues predominate over residues 332–360 (DLTDVTSLDGRETGAVESGGSRERGEDRG).

It belongs to the SH3BP5 family.

Functionally, functions as a guanine nucleotide exchange factor (GEF) for rab11a. The polypeptide is SH3 domain-binding protein 5-like (sh3bp5l) (Xenopus laevis (African clawed frog)).